A 439-amino-acid chain; its full sequence is FBD-associated F-box protein At5g56380 (439 aa).

Positions 1–61 (MDRISHLADE…LPETWGYQEP (61 aa)) constitute an F-box domain. The 49-residue stretch at 358 to 406 (WNQPGSVPRCLSSSLETLEWVEYGGTHEEKELSTYLFKTAVCFKKASFT) folds into the FBD domain.

In Arabidopsis thaliana (Mouse-ear cress), this protein is FBD-associated F-box protein At5g56380.